Reading from the N-terminus, the 138-residue chain is MNNQPCSIVWRRFLTSKVKPAVRIPNENLKANKPTNFTKNFPLNERTKAWERAGEDKESWFKRKYAHVHAKQKSQPQVDLYGKKEAHYSRLKQDILSSKRQQEEHKSKYSRKSVTLGLRPNPLMEYIYGTNSVIAALN.

The N-terminal 21 residues, 1–21 (MNNQPCSIVWRRFLTSKVKPA), are a transit peptide targeting the mitochondrion. The segment at 92-113 (KQDILSSKRQQEEHKSKYSRKS) is disordered.

It belongs to the class IV-like SAM-binding methyltransferase superfamily. RNA methyltransferase TrmH family.

It localises to the mitochondrion. It catalyses the reaction a guanosine in 21S rRNA + S-adenosyl-L-methionine = a 2'-O-methylguanosine in 21S rRNA + S-adenosyl-L-homocysteine + H(+). Functionally, S-adenosyl-L-methionine-dependent 2'-O-ribose methyltransferase that catalyzes the formation of the 2'-O-methylguanosine corresponding to position 2270 in S.cerevisiae 21S mitochondrial large ribosomal RNA, a universally conserved modification in the peptidyl transferase domain of the 21S rRNA. In Lachancea kluyveri (strain ATCC 58438 / CBS 3082 / BCRC 21498 / NBRC 1685 / JCM 7257 / NCYC 543 / NRRL Y-12651) (Yeast), this protein is rRNA methyltransferase 1, mitochondrial.